A 564-amino-acid chain; its full sequence is MKNINSEIRQQIRNAVINSINKSVETGELPSLEVTDITIEIPREKGHGDFSTNVAMQITKAAKKAPRQIADIIIKNIVTDGTYIDKVTCAGPGFINFTLDNSYLYETVNIIQQEKENYGRINIGNGKKVMVEFVSANPTGPLHMGNARGGALGDCIASVLDAAGYNVTREFLINDAGNQIEKFGTSLEARYIQLIKGEDAIEFPEDGYQGEDITEHMKDFIAIHGDKYINTDSEERKKVFVDFALPRNIARIKEGLESYGIHFDIWFSEQSLHKSGEVAETIQLLKDRGCTVEKEGALWLKGSVIGSEKDEVLVRNNGIPTYFAADIAYHRNKFEKRGFEWVINLWGADHHGHVARMKAAMAALGINPDKLDVVLFQLVRLYRNGEIARMSKRTGKSISLMDLVEEVGRDGVRYFFNTKASGSHLDFDLDLAVKQSNENPVFYVQYAHARICSMFKLLESEGIKVPSANAIKAELLDKPEELELIRKLSEYPDEVRISAETLEPSRLTRYVHDVASTFHSFYNACRVRGEEEELMQARLVLVDCTRIVVKNVLDLLSITAPERM.

Residues Ala136–Asn146 carry the 'HIGH' region motif.

The protein belongs to the class-I aminoacyl-tRNA synthetase family. In terms of assembly, monomer.

Its subcellular location is the cytoplasm. It catalyses the reaction tRNA(Arg) + L-arginine + ATP = L-arginyl-tRNA(Arg) + AMP + diphosphate. This Ruminiclostridium cellulolyticum (strain ATCC 35319 / DSM 5812 / JCM 6584 / H10) (Clostridium cellulolyticum) protein is Arginine--tRNA ligase.